The sequence spans 180 residues: MAEDDLCSLFFKLKVEDVTSSDELARHMKNASNERKPLIEPGENQSMDIDEEGGSVGHGLLYLYVDCPTMMLCFYGGSLPYNWMQGALLTNLPPYQHDVTLDEVNRGLRQASGFFGYADPMRSAYFAAFSFPGRVIKLNEQMELTSTKGKCLTFDLYASTQLRFEPGELVRHGECKFAIG.

Functionally, hydrolyzes cytokinin glucosides thus liberating free cytokinins. This Panax ginseng (Korean ginseng) protein is Cytokinin-beta-glucosidase 4 (ROLC4).